Reading from the N-terminus, the 44-residue chain is Protein PsbN (44 aa).

A helical transmembrane segment spans residues 6-26 (FFYGVFLWCLLISVTGYSIYI).

It belongs to the PsbN family.

It localises to the plastid. It is found in the chloroplast thylakoid membrane. Functionally, may play a role in photosystem I and II biogenesis. This Ostreococcus tauri protein is Protein PsbN.